Consider the following 357-residue polypeptide: Tetraacyldisaccharide 4'-kinase (357 aa).

Residue 49 to 56 (TIGGTGKT) participates in ATP binding.

This sequence belongs to the LpxK family.

The enzyme catalyses a lipid A disaccharide + ATP = a lipid IVA + ADP + H(+). The protein operates within glycolipid biosynthesis; lipid IV(A) biosynthesis; lipid IV(A) from (3R)-3-hydroxytetradecanoyl-[acyl-carrier-protein] and UDP-N-acetyl-alpha-D-glucosamine: step 6/6. Its function is as follows. Transfers the gamma-phosphate of ATP to the 4'-position of a tetraacyldisaccharide 1-phosphate intermediate (termed DS-1-P) to form tetraacyldisaccharide 1,4'-bis-phosphate (lipid IVA). In Porphyromonas gingivalis (strain ATCC BAA-308 / W83), this protein is Tetraacyldisaccharide 4'-kinase.